Consider the following 322-residue polypeptide: Acetyl-coenzyme A carboxylase carboxyl transferase subunit alpha (322 aa).

Residues 43-297 (ALKSKSNALT…KEVLTQQLNK (255 aa)) enclose the CoA carboxyltransferase C-terminal domain.

Belongs to the AccA family. Acetyl-CoA carboxylase is a heterohexamer composed of biotin carboxyl carrier protein (AccB), biotin carboxylase (AccC) and two subunits each of ACCase subunit alpha (AccA) and ACCase subunit beta (AccD).

The protein resides in the cytoplasm. It catalyses the reaction N(6)-carboxybiotinyl-L-lysyl-[protein] + acetyl-CoA = N(6)-biotinyl-L-lysyl-[protein] + malonyl-CoA. It functions in the pathway lipid metabolism; malonyl-CoA biosynthesis; malonyl-CoA from acetyl-CoA: step 1/1. In terms of biological role, component of the acetyl coenzyme A carboxylase (ACC) complex. First, biotin carboxylase catalyzes the carboxylation of biotin on its carrier protein (BCCP) and then the CO(2) group is transferred by the carboxyltransferase to acetyl-CoA to form malonyl-CoA. The protein is Acetyl-coenzyme A carboxylase carboxyl transferase subunit alpha of Vesicomyosocius okutanii subsp. Calyptogena okutanii (strain HA).